The following is a 265-amino-acid chain: MLRRFAVIGNPIVHSLSPVIHQMFAQQTQIELIYEKILGDDVKFEQQISDFFIQYGNGLNVTLPYKKRAYELAKVRTQRCTLAGAANTLWMEENQLHADNTDGIGLIRDLSRFLELKDKKILILGAGGAARGIIFPLLEAKPLQLIVANRTLEKAKELQRQFPQINVTSFAELTEFFDLIINATSASLSHQVIVLPEEVLSHKPFCYDLAYNQKTSTAFVQYARNRGCEAVDGLGMLVEQAAEAFFIWNNIMPSTKEILEQLRSF.

Residues 15-17 (SLS) and Thr-62 contribute to the shikimate site. Lys-66 functions as the Proton acceptor in the catalytic mechanism. Asn-87 and Asp-102 together coordinate shikimate. NADP(+) contacts are provided by residues 125 to 129 (GAGGA), 149 to 154 (NRTLEK), and Leu-209. Tyr-211 contacts shikimate. Residue Gly-233 participates in NADP(+) binding.

The protein belongs to the shikimate dehydrogenase family. As to quaternary structure, homodimer.

It carries out the reaction shikimate + NADP(+) = 3-dehydroshikimate + NADPH + H(+). Its pathway is metabolic intermediate biosynthesis; chorismate biosynthesis; chorismate from D-erythrose 4-phosphate and phosphoenolpyruvate: step 4/7. Involved in the biosynthesis of the chorismate, which leads to the biosynthesis of aromatic amino acids. Catalyzes the reversible NADPH linked reduction of 3-dehydroshikimate (DHSA) to yield shikimate (SA). In Legionella pneumophila (strain Lens), this protein is Shikimate dehydrogenase (NADP(+)).